Here is a 991-residue protein sequence, read N- to C-terminus: KAT8 regulatory NSL complex subunit 1-like protein (991 aa).

Lys-136 is covalently cross-linked (Glycyl lysine isopeptide (Lys-Gly) (interchain with G-Cter in SUMO2)). A disordered region spans residues 443-462 (VNSQVPQRSEEPLPEHDFEM). Residues 450 to 461 (RSEEPLPEHDFE) show a composition bias toward basic and acidic residues. Residue Ser-463 is modified to Phosphoserine. The span at 749–763 (ANVTSRTQNPSSQNT) shows a compositional bias: polar residues. A disordered region spans residues 749–770 (ANVTSRTQNPSSQNTSRRRLRS). Residues 798–919 (EILTPRWRKV…DGQEDKSLRW (122 aa)) form the PEHE domain. Lys-863 is subject to N6-acetyllysine.

Acetylated on lysine residues by KAT8 upon ionizing radiation-induced DNA damage; deacetylated by HDAC3.

The polypeptide is KAT8 regulatory NSL complex subunit 1-like protein (Kansl1l) (Mus musculus (Mouse)).